Reading from the N-terminus, the 428-residue chain is tRNA(Ile)-lysidine synthase (428 aa).

28-33 (SGGVDS) serves as a coordination point for ATP.

This sequence belongs to the tRNA(Ile)-lysidine synthase family.

Its subcellular location is the cytoplasm. The catalysed reaction is cytidine(34) in tRNA(Ile2) + L-lysine + ATP = lysidine(34) in tRNA(Ile2) + AMP + diphosphate + H(+). Ligates lysine onto the cytidine present at position 34 of the AUA codon-specific tRNA(Ile) that contains the anticodon CAU, in an ATP-dependent manner. Cytidine is converted to lysidine, thus changing the amino acid specificity of the tRNA from methionine to isoleucine. The protein is tRNA(Ile)-lysidine synthase of Streptococcus pyogenes serotype M3 (strain ATCC BAA-595 / MGAS315).